The following is a 473-amino-acid chain: Aspartyl/glutamyl-tRNA(Asn/Gln) amidotransferase subunit B (473 aa).

This sequence belongs to the GatB/GatE family. GatB subfamily. In terms of assembly, heterotrimer of A, B and C subunits.

It catalyses the reaction L-glutamyl-tRNA(Gln) + L-glutamine + ATP + H2O = L-glutaminyl-tRNA(Gln) + L-glutamate + ADP + phosphate + H(+). The catalysed reaction is L-aspartyl-tRNA(Asn) + L-glutamine + ATP + H2O = L-asparaginyl-tRNA(Asn) + L-glutamate + ADP + phosphate + 2 H(+). Functionally, allows the formation of correctly charged Asn-tRNA(Asn) or Gln-tRNA(Gln) through the transamidation of misacylated Asp-tRNA(Asn) or Glu-tRNA(Gln) in organisms which lack either or both of asparaginyl-tRNA or glutaminyl-tRNA synthetases. The reaction takes place in the presence of glutamine and ATP through an activated phospho-Asp-tRNA(Asn) or phospho-Glu-tRNA(Gln). The protein is Aspartyl/glutamyl-tRNA(Asn/Gln) amidotransferase subunit B of Wolbachia pipientis subsp. Culex pipiens (strain wPip).